Here is a 224-residue protein sequence, read N- to C-terminus: MDDFKLDKPTPYYLQFYNQLKKMIFNGTFKPGERINETQLAKSFGVSRSPIREAMRLLEKDGLLKADDRNGFSITSLTAKDVDEIYKIRIPLEQLAVELVIDEADEEELTILEKQLEETEKAIHNGTEDTEIIRLNQKFHELLVDFSHNRHLKNLLEHVNDLIHFCRILNYTGDHRAETILREHRRIFEEVKKKNKEAAKQHVLAHFNHDCEHLKHVLEEGKEN.

The region spanning 10–77 (TPYYLQFYNQ…DRNGFSITSL (68 aa)) is the HTH gntR-type domain. Positions 37-56 (ETQLAKSFGVSRSPIREAMR) form a DNA-binding region, H-T-H motif.

This is an uncharacterized protein from Bacillus subtilis (strain 168).